A 181-amino-acid chain; its full sequence is Ribosome-recycling factor (181 aa).

The disordered stretch occupies residues 131–154; it reads RRDAMDSVKKEKEMPEDDVRKAEN.

Belongs to the RRF family.

Its subcellular location is the cytoplasm. In terms of biological role, responsible for the release of ribosomes from messenger RNA at the termination of protein biosynthesis. May increase the efficiency of translation by recycling ribosomes from one round of translation to another. This Leuconostoc citreum (strain KM20) protein is Ribosome-recycling factor.